We begin with the raw amino-acid sequence, 426 residues long: Phosphomethylpyrimidine synthase (426 aa).

Substrate-binding positions include N65, M94, Y123, H162, 184 to 186 (SRG), 225 to 228 (DGMR), and E264. H268 is a binding site for Zn(2+). Y291 is a binding site for substrate. H332 provides a ligand contact to Zn(2+). C408, C411, and C415 together coordinate [4Fe-4S] cluster.

This sequence belongs to the ThiC family. [4Fe-4S] cluster serves as cofactor.

The catalysed reaction is 5-amino-1-(5-phospho-beta-D-ribosyl)imidazole + S-adenosyl-L-methionine = 4-amino-2-methyl-5-(phosphooxymethyl)pyrimidine + CO + 5'-deoxyadenosine + formate + L-methionine + 3 H(+). It participates in cofactor biosynthesis; thiamine diphosphate biosynthesis. Its function is as follows. Catalyzes the synthesis of the hydroxymethylpyrimidine phosphate (HMP-P) moiety of thiamine from aminoimidazole ribotide (AIR) in a radical S-adenosyl-L-methionine (SAM)-dependent reaction. The chain is Phosphomethylpyrimidine synthase from Methanococcus vannielii (strain ATCC 35089 / DSM 1224 / JCM 13029 / OCM 148 / SB).